Consider the following 318-residue polypeptide: Solute carrier family 25 member 34 (318 aa).

3 Solcar repeats span residues 18–111 (VSPA…ACQA), 115–208 (QQPG…AKAW), and 218–309 (DSWL…LRKL). A run of 6 helical transmembrane segments spans residues 21 to 41 (AVDL…TNPL), 59 to 79 (TYPR…RADG), 112 to 134 (GLTQ…GAFV), 184 to 205 (VGAA…FTSA), 220 to 240 (WLAT…VMAP), and 292 to 315 (LGPH…RAQH).

Belongs to the mitochondrial carrier (TC 2.A.29) family.

The protein resides in the mitochondrion inner membrane. The enzyme catalyses a dicarboxylate(in) + sulfate(out) = a dicarboxylate(out) + sulfate(in). Putative antiporter that exchanges dicarboxylates and sulfur oxoanions across the inner membrane of mitochondria. The protein is Solute carrier family 25 member 34 (Slc25a34) of Rattus norvegicus (Rat).